A 182-amino-acid chain; its full sequence is MIVKIIKGDITEIEAEAIVNAANSYLEHGGGVARAIVEKGGYIIQKESREYVRKYGPVPTGGVAVTSAGKLKAKYVIHAVGPRYGIEGEEKLEEAIRNALRKAEELKLSSIALPAISTGIYGYPYEICAEKMVKVIKEEYTNFKHLNTIIVSLYSEEAYNIFVNIFERELAKEKNITLKMSP.

A Macro domain is found at 1–170 (MIVKIIKGDI…IFVNIFEREL (170 aa)).

This is an uncharacterized protein from Sulfurisphaera tokodaii (strain DSM 16993 / JCM 10545 / NBRC 100140 / 7) (Sulfolobus tokodaii).